We begin with the raw amino-acid sequence, 152 residues long: Nucleoside diphosphate kinase A (152 aa).

ATP is bound by residues K12, F60, R88, and T94. A Glycyl lysine isopeptide (Lys-Gly) (interchain with G-Cter in ubiquitin) cross-link involves residue K100. R105 and N115 together coordinate ATP. Catalysis depends on H118, which acts as the Pros-phosphohistidine intermediate. Phosphoserine occurs at positions 120 and 122. K124 carries the post-translational modification N6-acetyllysine. Phosphoserine is present on S125.

It belongs to the NDK family. In terms of assembly, hexamer of two different chains: An and B (A6, A5B, A4B2, A3B3, A2B4, AB5, B6). Interacts with PRUNE1. Component of the SET complex, composed of at least ANP32A, APEX1, HMGB2, NME1, SET and TREX1. Within this complex, interacts directly with SET. Also interacts with TREX1, but only following translocation to the nucleus. Mg(2+) serves as cofactor.

It localises to the cytoplasm. It is found in the nucleus. It catalyses the reaction a 2'-deoxyribonucleoside 5'-diphosphate + ATP = a 2'-deoxyribonucleoside 5'-triphosphate + ADP. The enzyme catalyses a ribonucleoside 5'-diphosphate + ATP = a ribonucleoside 5'-triphosphate + ADP. Its activity is regulated as follows. Autophosphorylation at His-118 increases serine/threonine protein kinase activity of the enzyme. Interaction with the SET complex inhibits exonuclease activity. Its function is as follows. Major role in the synthesis of nucleoside triphosphates other than ATP. The ATP gamma phosphate is transferred to the NDP beta phosphate via a ping-pong mechanism, using a phosphorylated active-site intermediate. Possesses nucleoside-diphosphate kinase, serine/threonine-specific protein kinase, geranyl and farnesyl pyrophosphate kinase, histidine protein kinase and 3'-5' exonuclease activities. Involved in cell proliferation, differentiation and development, signal transduction, G protein-coupled receptor endocytosis, and gene expression. Required for neural development including neural patterning and cell fate determination. During GZMA-mediated cell death, works in concert with TREX1. NME1 nicks one strand of DNA and TREX1 removes bases from the free 3' end to enhance DNA damage and prevent DNA end reannealing and rapid repair. This chain is Nucleoside diphosphate kinase A (Nme1), found in Mus musculus (Mouse).